The primary structure comprises 158 residues: Transcription elongation factor GreA (158 aa).

The stretch at 53 to 75 forms a coiled coil; sequence AKERQGQVEATIGDLEDKLSRAQ.

Belongs to the GreA/GreB family.

In terms of biological role, necessary for efficient RNA polymerase transcription elongation past template-encoded arresting sites. The arresting sites in DNA have the property of trapping a certain fraction of elongating RNA polymerases that pass through, resulting in locked ternary complexes. Cleavage of the nascent transcript by cleavage factors such as GreA or GreB allows the resumption of elongation from the new 3'terminus. GreA releases sequences of 2 to 3 nucleotides. This Sphingopyxis alaskensis (strain DSM 13593 / LMG 18877 / RB2256) (Sphingomonas alaskensis) protein is Transcription elongation factor GreA.